The primary structure comprises 228 residues: FCS-Like Zinc finger 12 (228 aa).

The FLZ-type zinc finger occupies 162-205; that stretch reads DFLTSCCLCKKKLQGKDIYMYKGDEGFCSKECRSLKIMEDSLKE.

It belongs to the FLZ family. In terms of assembly, interacts with KIN10 and KIN11 via its FLZ-type zinc finger domain. Interacts with KINB1 and KINB2 via its N-terminal part. Forms homodimer and heterodimer with FLZ2 and FLZ10 in vitro.

Its function is as follows. May act as an adapter to facilitate the interaction of SnRK1 complex with effector proteins, conferring tissue- and stimulus-type specific differences in the SnRK1 regulation pathway. In Arabidopsis thaliana (Mouse-ear cress), this protein is FCS-Like Zinc finger 12.